Here is a 174-residue protein sequence, read N- to C-terminus: UPF0340 protein SAR2202 (174 aa).

This sequence belongs to the UPF0340 family.

This chain is UPF0340 protein SAR2202, found in Staphylococcus aureus (strain MRSA252).